A 421-amino-acid chain; its full sequence is D-amino acid dehydrogenase (421 aa).

3–17 contacts FAD; it reads VTILGAGVIGVTSAY.

Belongs to the DadA oxidoreductase family. Requires FAD as cofactor.

The catalysed reaction is a D-alpha-amino acid + A + H2O = a 2-oxocarboxylate + AH2 + NH4(+). Its pathway is amino-acid degradation; D-alanine degradation; NH(3) and pyruvate from D-alanine: step 1/1. Oxidative deamination of D-amino acids. This Allorhizobium ampelinum (strain ATCC BAA-846 / DSM 112012 / S4) (Agrobacterium vitis (strain S4)) protein is D-amino acid dehydrogenase.